The chain runs to 709 residues: Mucin-20 (709 aa).

The signal sequence occupies residues 1–25; sequence MGCLWGLALPLFFFCWEVGVSGSSA. The segment covering 57–69 has biased composition (polar residues); sequence TQTLSAETSSRAS. Disordered regions lie at residues 57 to 92 and 170 to 403; these read TQTL…ARET and KGLS…WSPG. The span at 78-92 shows a compositional bias: basic and acidic residues; the sequence is AETRGAKRISPARET. 12 stretches are compositionally biased toward low complexity: residues 173 to 182, 190 to 199, 209 to 218, 228 to 237, 247 to 256, 266 to 275, 285 to 294, 304 to 313, 323 to 332, 342 to 351, 361 to 370, and 380 to 389; these read SSESSASSDS and SRASESSASS. 11 tandem repeats follow at residues 173-192, 193-211, 212-230, 231-249, 250-268, 269-287, 288-306, 307-325, 326-344, 345-363, and 364-382. Residues 173 to 400 are 12 X 20 AA approximate tandem repeats of S-S-E-S-S-A-S-S-D-S-P-H-P-V-I-T-P-S-R-A; the sequence is SSESSASSDS…GPHPVITPSW (228 aa). The 12; approximate repeat unit spans residues 383 to 400; it reads SESSASSDGPHPVITPSW. Asn423 carries N-linked (GlcNAc...) asparagine glycosylation. 2 disordered regions span residues 434–515 and 583–657; these read SSIP…APGA and NFTP…VSAG. Positions 450–656 are involved in oligomerization; that stretch reads VKASSTSDPP…RTRPTTDVSA (207 aa). Residues 474–489 are compositionally biased toward polar residues; it reads VTASAETLSTAGTTES. A compositionally biased stretch (low complexity) spans 613–652; it reads TTTNSSRGTNSTLAKITTSAKTTMKPPTATPTTARTRPTT. N-linked (GlcNAc...) asparagine glycans are attached at residues Asn616 and Asn622. Positions 657–709 are interaction with MET; it reads GENGGFLLLRLSVASPEDLTDPRVAERLMQQLHRELHAHAPHFQVSLLRVRRG.

As to quaternary structure, interacts with MET; oligomerization increases affinity for MET. As to expression, highly expressed in kidney, moderately in placenta, lung, prostate, liver, and digestive system. In the kidney, localized in the proximal tubules but not in the glomerulus or distal tubules. Detected in most of the male urogenital tract epithelia, with the exception of epididymis.

The protein resides in the secreted. It is found in the apical cell membrane. It localises to the basolateral cell membrane. Its subcellular location is the cell projection. The protein localises to the microvillus membrane. Its function is as follows. May regulate MET signaling cascade. Seems to decrease hepatocyte growth factor (HGF)-induced transient MAPK activation. Blocks GRB2 recruitment to MET thus suppressing the GRB2-RAS pathway. Inhibits HGF-induced proliferation of MMP1 and MMP9 expression. The protein is Mucin-20 (MUC20) of Homo sapiens (Human).